Reading from the N-terminus, the 379-residue chain is MRVLLTSLPGIGHLFPMVPLGWALQAAGHTVLVATDREFLPVVTGAGLSATAVLDPVDPVELFKPVEPFGDPLSPAERTGHRCAEAGVRALPAMRALVDVWHPDLVIAEPMELAGPAAATNAGVPWVRHSYGLIPPGPLLSVAAEVLDAELAVLGLSALAKPARTIDVCPDSLRPSDGVATVPMRYVPYNGPAGVPDWLLAGPPARPRVCLTLGTSLPRRDPHVAPLWRLLLDELVALGQEVVIAIDESHRPLLGHLPDGVRAARIPLCDLLPTCTAIVHHGGSGSTMAAASFGVPQLVVPHFADHFTNAERLTAVGAGLSLPHDTDDLARISAACELITGDGPHRAISRRLADENARRPTPAVVAEGLAAEQRSMTPA.

Belongs to the glycosyltransferase 28 family.

The enzyme catalyses dTDP-4-O-demethyl-beta-L-noviose + novobiocic acid = desmethyldescarbamoylnovobiocin + dTDP + H(+). It functions in the pathway antibiotic biosynthesis; novobiocin biosynthesis. With respect to regulation, inhibited by TDP-L-rhamnose, the sugar donor that most closely structurally resembles the natural substrate dTDP-beta-L-noviose. In terms of biological role, catalyzes the transfer of L-noviose from dTDP-4-O-demethyl-beta-L-noviose to the phenolic oxygen of novobiocic acid, creating the full ABC ring system in the novobiocin biosynthesis pathway. Novobiocin is an aminocoumarin family antibiotic that targets bacterial DNA gyrases. Also shows activity with variant coumarin aglycones, suggesting it may be a promiscuous catalyst for noviosylation of a range of planar scaffolds. Does not show activity with TDP-L-rhamnose. This chain is L-demethylnoviosyl transferase (novM), found in Streptomyces niveus (Streptomyces spheroides).